The primary structure comprises 1449 residues: Gag-Pol polyprotein (1449 aa).

A lipid anchor (N-myristoyl glycine; by host) is attached at Gly2. Positions 16-22 match the Nuclear export signal motif; it reads LEKVRLR. The short motif at 26 to 32 is the Nuclear localization signal element; that stretch reads KKKYMLK. Residues 215–237 are disordered; sequence DLQHPQPGPLPAGQLREPRGSDI. 2 consecutive CCHC-type zinc fingers follow at residues 392–409 and 413–430; these read IKCW…QCRA and QGCW…KCPE. The interval 442–494 is disordered; the sequence is GKEAPQFPHGPDASGADTNCSPRGSSCGSTEELHEDGQKAEGEQRETLQGGDR. Positions 457–470 are enriched in polar residues; sequence ADTNCSPRGSSCGS. Over residues 472-487 the composition is skewed to basic and acidic residues; the sequence is EELHEDGQKAEGEQRE. A Peptidase A2 domain is found at 518-587; that stretch reads VEVLLDTGAD…TPINIFGRNL (70 aa). The active-site For protease activity; shared with dimeric partner is Asp523. Positions 641 to 831 constitute a Reverse transcriptase domain; sequence DGQLEEAPPT…PPFQWMGYEL (191 aa). 3 residues coordinate Mg(2+): Asp707, Asp782, and Asp783. The RT 'primer grip' stretch occupies residues 824 to 832; it reads FQWMGYELW. A Tryptophan repeat motif motif is present at residues 994-1010; that stretch reads WEQWWTDYWQVTWIPDW. An RNase H type-1 domain is found at 1030 to 1153; the sequence is IQGAETFYVD…VDHLVSQGIR (124 aa). Mg(2+) is bound by residues Asp1039, Glu1074, Asp1094, and Asp1145. Residues 1159-1200 form an Integrase-type zinc finger; it reads KKIEPAQEEHEKYHSNVKELVFKFGLPRLVAKQIVDTCDKCH. Zn(2+)-binding residues include His1168, His1172, Cys1196, and Cys1199. Residues 1210–1360 enclose the Integrase catalytic domain; it reads VNAELGTWQM…TPAERLVNMI (151 aa). The Mg(2+) site is built by Asp1220 and Asp1272. A DNA-binding region (integrase-type) is located at residues 1379 to 1426; it reads FRVYYREGRDQLWKGPGELLWKGEGAVILKVGTEIKVVPRRKAKIIKD.

In terms of assembly, homotrimer. Interacts with gp41 (via C-terminus). As to quaternary structure, homodimer. The active site consists of two apposed aspartic acid residues. Heterodimer of p66 RT and p51 RT (RT p66/p51). Heterodimerization of RT is essential for DNA polymerase activity. Despite the sequence identities, p66 RT and p51 RT have distinct folding. In terms of assembly, homotetramer; may further associate as a homohexadecamer. Requires Mg(2+) as cofactor. In terms of processing, specific enzymatic cleavages by the viral protease yield mature proteins. The protease is released by autocatalytic cleavage. The polyprotein is cleaved during and after budding, this process is termed maturation. Proteolytic cleavage of p66 RT removes the RNase H domain to yield the p51 RT subunit. Post-translationally, capsid protein p24 is phosphorylated.

The protein localises to the virion. The protein resides in the host nucleus. It localises to the host cytoplasm. It is found in the host cell membrane. It catalyses the reaction Specific for a P1 residue that is hydrophobic, and P1' variable, but often Pro.. It carries out the reaction Endohydrolysis of RNA in RNA/DNA hybrids. Three different cleavage modes: 1. sequence-specific internal cleavage of RNA. Human immunodeficiency virus type 1 and Moloney murine leukemia virus enzymes prefer to cleave the RNA strand one nucleotide away from the RNA-DNA junction. 2. RNA 5'-end directed cleavage 13-19 nucleotides from the RNA end. 3. DNA 3'-end directed cleavage 15-20 nucleotides away from the primer terminus.. The catalysed reaction is 3'-end directed exonucleolytic cleavage of viral RNA-DNA hybrid.. The enzyme catalyses DNA(n) + a 2'-deoxyribonucleoside 5'-triphosphate = DNA(n+1) + diphosphate. Its activity is regulated as follows. The viral protease is inhibited by many synthetic protease inhibitors (PIs), such as amprenavir, atazanavir, indinavir, loprinavir, nelfinavir, ritonavir and saquinavir. RT can be inhibited either by nucleoside RT inhibitors (NRTIs) or by non nucleoside RT inhibitors (NNRTIs). NRTIs act as chain terminators, whereas NNRTIs inhibit DNA polymerization by binding a small hydrophobic pocket near the RT active site and inducing an allosteric change in this region. Classical NRTIs are abacavir, adefovir (PMEA), didanosine (ddI), lamivudine (3TC), stavudine (d4T), tenofovir (PMPA), zalcitabine (ddC), and zidovudine (AZT). Classical NNRTIs are atevirdine (BHAP U-87201E), delavirdine, efavirenz (DMP-266), emivirine (I-EBU), and nevirapine (BI-RG-587). The tritherapies used as a basic effective treatment of AIDS associate two NRTIs and one NNRTI. Use of protease inhibitors in tritherapy regimens permit more ambitious therapeutic strategies. Functionally, gag-Pol polyprotein and Gag polyprotein may regulate their own translation, by the binding genomic RNA in the 5'-UTR. At low concentration, Gag-Pol and Gag would promote translation, whereas at high concentration, the polyproteins encapsidate genomic RNA and then shut off translation. Matrix protein p17 has two main functions: in infected cell, it targets Gag and Gag-pol polyproteins to the plasma membrane via a multipartite membrane-binding signal, that includes its myristointegration complex. The myristoylation signal and the NLS exert conflicting influences its subcellular localization. The key regulation of these motifs might be phosphorylation of a portion of MA molecules on the C-terminal tyrosine at the time of virus maturation, by virion-associated cellular tyrosine kinase. Implicated in the release from host cell mediated by Vpu. In terms of biological role, capsid protein p24 forms the conical core that encapsulates the genomic RNA-nucleocapsid complex in the virion. The core is constituted by capsid protein hexamer subunits. The core is disassembled soon after virion entry. Interaction with host PPIA/CYPA protects the virus from restriction by host TRIM5-alpha and from an unknown antiviral activity in host cells. This capsid restriction by TRIM5 is one of the factors which restricts SIV to the simian species. Its function is as follows. Nucleocapsid protein p7 encapsulates and protects viral dimeric unspliced (genomic) RNA. Binds these RNAs through its zinc fingers. Facilitates rearangement of nucleic acid secondary structure during retrotranscription of genomic RNA. This capability is referred to as nucleic acid chaperone activity. Functionally, the aspartyl protease mediates proteolytic cleavages of Gag and Gag-Pol polyproteins during or shortly after the release of the virion from the plasma membrane. Cleavages take place as an ordered, step-wise cascade to yield mature proteins. This process is called maturation. Displays maximal activity during the budding process just prior to particle release from the cell. Also cleaves Nef and Vif, probably concomitantly with viral structural proteins on maturation of virus particles. Hydrolyzes host EIF4GI and PABP1 in order to shut off the capped cellular mRNA translation. The resulting inhibition of cellular protein synthesis serves to ensure maximal viral gene expression and to evade host immune response. Reverse transcriptase/ribonuclease H (RT) is a multifunctional enzyme that converts the viral dimeric RNA genome into dsDNA in the cytoplasm, shortly after virus entry into the cell. This enzyme displays a DNA polymerase activity that can copy either DNA or RNA templates, and a ribonuclease H (RNase H) activity that cleaves the RNA strand of RNA-DNA heteroduplexes in a partially processive 3' to 5' endonucleasic mode. Conversion of viral genomic RNA into dsDNA requires many steps. A tRNA binds to the primer-binding site (PBS) situated at the 5'-end of the viral RNA. RT uses the 3' end of the tRNA primer to perform a short round of RNA-dependent minus-strand DNA synthesis. The reading proceeds through the U5 region and ends after the repeated (R) region which is present at both ends of viral RNA. The portion of the RNA-DNA heteroduplex is digested by the RNase H, resulting in a ssDNA product attached to the tRNA primer. This ssDNA/tRNA hybridizes with the identical R region situated at the 3' end of viral RNA. This template exchange, known as minus-strand DNA strong stop transfer, can be either intra- or intermolecular. RT uses the 3' end of this newly synthesized short ssDNA to perform the RNA-dependent minus-strand DNA synthesis of the whole template. RNase H digests the RNA template except for two polypurine tracts (PPTs) situated at the 5'-end and near the center of the genome. It is not clear if both polymerase and RNase H activities are simultaneous. RNase H can probably proceed both in a polymerase-dependent (RNA cut into small fragments by the same RT performing DNA synthesis) and a polymerase-independent mode (cleavage of remaining RNA fragments by free RTs). Secondly, RT performs DNA-directed plus-strand DNA synthesis using the PPTs that have not been removed by RNase H as primers. PPTs and tRNA primers are then removed by RNase H. The 3' and 5' ssDNA PBS regions hybridize to form a circular dsDNA intermediate. Strand displacement synthesis by RT to the PBS and PPT ends produces a blunt ended, linear dsDNA copy of the viral genome that includes long terminal repeats (LTRs) at both ends. In terms of biological role, integrase catalyzes viral DNA integration into the host chromosome, by performing a series of DNA cutting and joining reactions. This enzyme activity takes place after virion entry into a cell and reverse transcription of the RNA genome in dsDNA. The first step in the integration process is 3' processing. This step requires a complex comprising the viral genome, matrix protein, Vpr and integrase. This complex is called the pre-integration complex (PIC). The integrase protein removes 2 nucleotides from each 3' end of the viral DNA, leaving recessed CA OH's at the 3' ends. In the second step, the PIC enters cell nucleus. This process is mediated through integrase and Vpr proteins, and allows the virus to infect a non dividing cell. This ability to enter the nucleus is specific of lentiviruses, other retroviruses cannot and rely on cell division to access cell chromosomes. In the third step, termed strand transfer, the integrase protein joins the previously processed 3' ends to the 5' ends of strands of target cellular DNA at the site of integration. The 5'-ends are produced by integrase-catalyzed staggered cuts, 5 bp apart. A Y-shaped, gapped, recombination intermediate results, with the 5'-ends of the viral DNA strands and the 3' ends of target DNA strands remaining unjoined, flanking a gap of 5 bp. The last step is viral DNA integration into host chromosome. This involves host DNA repair synthesis in which the 5 bp gaps between the unjoined strands are filled in and then ligated. Since this process occurs at both cuts flanking the SIV genome, a 5 bp duplication of host DNA is produced at the ends of SIV integration. Alternatively, Integrase may catalyze the excision of viral DNA just after strand transfer, this is termed disintegration. The polypeptide is Gag-Pol polyprotein (gag-pol) (Cercopithecidae (Old World monkeys)).